The following is a 293-amino-acid chain: Glutamyl-Q tRNA(Asp) synthetase (293 aa).

Residues 9 to 13 and Glu45 each bind L-glutamate; that span reads RFAPS. Positions 12–22 match the 'HIGH' region motif; the sequence is PSPSGELHFGS. Zn(2+) contacts are provided by Cys101, Cys103, Tyr115, and Cys119. Residues Tyr172 and Arg190 each contribute to the L-glutamate site. A 'KMSKS' region motif is present at residues 228 to 232; it reads KLSKQ. Lys231 provides a ligand contact to ATP.

It belongs to the class-I aminoacyl-tRNA synthetase family. GluQ subfamily. Zn(2+) serves as cofactor.

Its function is as follows. Catalyzes the tRNA-independent activation of glutamate in presence of ATP and the subsequent transfer of glutamate onto a tRNA(Asp). Glutamate is transferred on the 2-amino-5-(4,5-dihydroxy-2-cyclopenten-1-yl) moiety of the queuosine in the wobble position of the QUC anticodon. The sequence is that of Glutamyl-Q tRNA(Asp) synthetase from Klebsiella pneumoniae (strain 342).